A 266-amino-acid polypeptide reads, in one-letter code: Flavin-dependent thymidylate synthase (266 aa).

A ThyX domain is found at 11-222; it reads GFIRLVDYMG…PLACASFERH (212 aa). Residues serine 57, 80–82, and glutamate 88 contribute to the FAD site; that span reads RHR. DUMP contacts are provided by residues 77 to 80, 88 to 92, and arginine 161; these read QWIR and EISGR. The short motif at 80-90 is the ThyX motif element; that stretch reads RHRTARLNEIS. Residues 177 to 179 and histidine 183 contribute to the FAD site; that span reads DLH. Position 188 (arginine 188) interacts with dUMP. Catalysis depends on arginine 188, which acts as the Involved in ionization of N3 of dUMP, leading to its activation.

Belongs to the thymidylate synthase ThyX family. Homotetramer. FAD is required as a cofactor.

The catalysed reaction is dUMP + (6R)-5,10-methylene-5,6,7,8-tetrahydrofolate + NADPH + H(+) = dTMP + (6S)-5,6,7,8-tetrahydrofolate + NADP(+). It participates in pyrimidine metabolism; dTTP biosynthesis. In terms of biological role, catalyzes the reductive methylation of 2'-deoxyuridine-5'-monophosphate (dUMP) to 2'-deoxythymidine-5'-monophosphate (dTMP) while utilizing 5,10-methylenetetrahydrofolate (mTHF) as the methyl donor, and NADPH and FADH(2) as the reductant. The polypeptide is Flavin-dependent thymidylate synthase (Treponema denticola (strain ATCC 35405 / DSM 14222 / CIP 103919 / JCM 8153 / KCTC 15104)).